Consider the following 525-residue polypeptide: MALNIKEISEVIEKQIKNYGKDIIEAEQGSVVTIGDGVSLIYGLDKALMGELLIFPNDVYGMVLSLEEGAVGAVILGDYKLIKEGDIVKRTGKVVETPVGDAMIGRVVNALGQPIDNNGPIKTKKSKPVERIATGVMARKSVSQPLETGILGIDASIPIGKGQRELIIGDRQTGKTAVAIDTIINQKGKNVKCIYVSIGQKDSTIAQVVEKLKKFGAMEYTTVVNAGASDSAPLQYLAPYTGVTIGEEWMENGEDVLIVYDDLSKHAVAYREMSLLLRRPPGREAYPGDVFYLHSRLLERAARVNEKFGGGSITALPIIETQASDISAYIPTNVISITDGQIFLSSDLFMAGIRPAINIGPSVSRVGSSAQIKAVKQVSGTLKLELAQYYELEAFSKFGSDLDESTKATLDHGARIIQMLVQRQYSPLNQIDEAIILFAIKSHLIKWIPLENIRDFKTEIITFFNNEKDAKALKAELTKKLEWNADLESGIQKEIEKLVVKFTSTLKNYNPTIFGDEKEFKKLGK.

169-176 (GDRQTGKT) provides a ligand contact to ATP.

This sequence belongs to the ATPase alpha/beta chains family. As to quaternary structure, F-type ATPases have 2 components, CF(1) - the catalytic core - and CF(0) - the membrane proton channel. CF(1) has five subunits: alpha(3), beta(3), gamma(1), delta(1), epsilon(1). CF(0) has three main subunits: a(1), b(2) and c(9-12). The alpha and beta chains form an alternating ring which encloses part of the gamma chain. CF(1) is attached to CF(0) by a central stalk formed by the gamma and epsilon chains, while a peripheral stalk is formed by the delta and b chains.

The protein resides in the cell membrane. It catalyses the reaction ATP + H2O + 4 H(+)(in) = ADP + phosphate + 5 H(+)(out). In terms of biological role, produces ATP from ADP in the presence of a proton gradient across the membrane. The alpha chain is a regulatory subunit. This is ATP synthase subunit alpha from Mesoplasma florum (strain ATCC 33453 / NBRC 100688 / NCTC 11704 / L1) (Acholeplasma florum).